The sequence spans 1060 residues: Carbamoyl phosphate synthase large chain (1060 aa).

The interval 1-401 (MPKRQDIHKI…SLLKAVRSLE (401 aa)) is carboxyphosphate synthetic domain. Positions 129, 169, 175, 176, 208, 210, 215, 241, 242, 243, 284, and 298 each coordinate ATP. The 195-residue stretch at 133-327 (KNLMQKLHEP…IAKMAAKIAV (195 aa)) folds into the ATP-grasp 1 domain. Residues glutamine 284, glutamate 298, and asparagine 300 each contribute to the Mg(2+) site. Residues glutamine 284, glutamate 298, and asparagine 300 each contribute to the Mn(2+) site. Residues 402-546 (VGLIHPERPA…YSTYESSTES (145 aa)) are oligomerization domain. The segment at 547-929 (VKSDKPSVLV…ALYKAFEAAG (383 aa)) is carbamoyl phosphate synthetic domain. In terms of domain architecture, ATP-grasp 2 spans 671-861 (DQVIKSLKLP…LAQVATLAIL (191 aa)). ATP is bound by residues arginine 707, histidine 746, leucine 748, glutamate 752, glycine 777, isoleucine 778, histidine 779, serine 780, glutamine 820, and glutamate 832. Mg(2+)-binding residues include glutamine 820, glutamate 832, and asparagine 834. Residues glutamine 820, glutamate 832, and asparagine 834 each coordinate Mn(2+). The region spanning 930-1060 (MHLPQFGRAL…QAFSISPIKS (131 aa)) is the MGS-like domain. Residues 930-1060 (MHLPQFGRAL…QAFSISPIKS (131 aa)) are allosteric domain.

The protein belongs to the CarB family. As to quaternary structure, composed of two chains; the small (or glutamine) chain promotes the hydrolysis of glutamine to ammonia, which is used by the large (or ammonia) chain to synthesize carbamoyl phosphate. Tetramer of heterodimers (alpha,beta)4. Mg(2+) is required as a cofactor. The cofactor is Mn(2+).

The enzyme catalyses hydrogencarbonate + L-glutamine + 2 ATP + H2O = carbamoyl phosphate + L-glutamate + 2 ADP + phosphate + 2 H(+). It carries out the reaction hydrogencarbonate + NH4(+) + 2 ATP = carbamoyl phosphate + 2 ADP + phosphate + 2 H(+). It functions in the pathway amino-acid biosynthesis; L-arginine biosynthesis; carbamoyl phosphate from bicarbonate: step 1/1. Its pathway is pyrimidine metabolism; UMP biosynthesis via de novo pathway; (S)-dihydroorotate from bicarbonate: step 1/3. Its function is as follows. Large subunit of the glutamine-dependent carbamoyl phosphate synthetase (CPSase). CPSase catalyzes the formation of carbamoyl phosphate from the ammonia moiety of glutamine, carbonate, and phosphate donated by ATP, constituting the first step of 2 biosynthetic pathways, one leading to arginine and/or urea and the other to pyrimidine nucleotides. The large subunit (synthetase) binds the substrates ammonia (free or transferred from glutamine from the small subunit), hydrogencarbonate and ATP and carries out an ATP-coupled ligase reaction, activating hydrogencarbonate by forming carboxy phosphate which reacts with ammonia to form carbamoyl phosphate. In Lacticaseibacillus casei (strain BL23) (Lactobacillus casei), this protein is Carbamoyl phosphate synthase large chain.